The following is a 285-amino-acid chain: Pantothenate synthetase (285 aa).

33-40 is an ATP binding site; the sequence is MGALHEGH. Histidine 40 (proton donor) is an active-site residue. (R)-pantoate is bound at residue glutamine 64. Glutamine 64 provides a ligand contact to beta-alanine. 150–153 lines the ATP pocket; it reads GEKD. Glutamine 156 is a (R)-pantoate binding site. ATP is bound by residues alanine 179 and 187–190; that span reads LSSR.

It belongs to the pantothenate synthetase family. Homodimer.

The protein localises to the cytoplasm. The catalysed reaction is (R)-pantoate + beta-alanine + ATP = (R)-pantothenate + AMP + diphosphate + H(+). It participates in cofactor biosynthesis; (R)-pantothenate biosynthesis; (R)-pantothenate from (R)-pantoate and beta-alanine: step 1/1. Functionally, catalyzes the condensation of pantoate with beta-alanine in an ATP-dependent reaction via a pantoyl-adenylate intermediate. The chain is Pantothenate synthetase from Caulobacter vibrioides (strain ATCC 19089 / CIP 103742 / CB 15) (Caulobacter crescentus).